Reading from the N-terminus, the 76-residue chain is Acyl carrier protein (76 aa).

The Carrier domain occupies 1 to 74; that stretch reads MEERIKEIIA…DVINYIKEKK (74 aa). At S34 the chain carries O-(pantetheine 4'-phosphoryl)serine.

It belongs to the acyl carrier protein (ACP) family. In terms of processing, 4'-phosphopantetheine is transferred from CoA to a specific serine of apo-ACP by AcpS. This modification is essential for activity because fatty acids are bound in thioester linkage to the sulfhydryl of the prosthetic group.

Its subcellular location is the cytoplasm. It participates in lipid metabolism; fatty acid biosynthesis. Its function is as follows. Carrier of the growing fatty acid chain in fatty acid biosynthesis. The sequence is that of Acyl carrier protein from Persephonella marina (strain DSM 14350 / EX-H1).